Here is a 520-residue protein sequence, read N- to C-terminus: Amine oxidase [flavin-containing] B (520 aa).

Serine 2 is subject to N-acetylserine. Residues 2 to 489 (SNKSDVIVVG…TFLERHLPSV (488 aa)) are Cytoplasmic-facing. Residues lysine 52 and lysine 248 each carry the N6-acetyllysine modification. Cysteine 397 bears the S-8alpha-FAD cysteine mark. The helical; Anchor for type IV membrane protein transmembrane segment at 490-516 (PGLLKLFGLTTILSATALGFLAHKRGL) threads the bilayer. Over 517 to 520 (FVHF) the chain is Mitochondrial intermembrane.

This sequence belongs to the flavin monoamine oxidase family. As to quaternary structure, monomer, homo- or heterodimer (containing two subunits of similar size). Each subunit contains a covalently bound flavin. Enzymatically active as monomer. FAD serves as cofactor.

Its subcellular location is the mitochondrion outer membrane. It catalyses the reaction a secondary aliphatic amine + O2 + H2O = a primary amine + an aldehyde + H2O2. It carries out the reaction (R)-adrenaline + O2 + H2O = (R)-3,4-dihydroxymandelaldehyde + methylamine + H2O2. The enzyme catalyses a primary methyl amine + O2 + H2O = an aldehyde + H2O2 + NH4(+). The catalysed reaction is benzylamine + O2 + H2O = benzaldehyde + H2O2 + NH4(+). It catalyses the reaction dopamine + O2 + H2O = 3,4-dihydroxyphenylacetaldehyde + H2O2 + NH4(+). It carries out the reaction tyramine + O2 + H2O = (4-hydroxyphenyl)acetaldehyde + H2O2 + NH4(+). The enzyme catalyses (R)-noradrenaline + O2 + H2O = (R)-3,4-dihydroxymandelaldehyde + H2O2 + NH4(+). The catalysed reaction is 2-phenylethylamine + O2 + H2O = 2-phenylacetaldehyde + H2O2 + NH4(+). It catalyses the reaction N-acetylputrescine + O2 + H2O = 4-acetamidobutanal + H2O2 + NH4(+). Functionally, catalyzes the oxidative deamination of primary and some secondary amines such as neurotransmitters, and exogenous amines including the tertiary amine, neurotoxin 1-methyl-4-phenyl-1,2,3,6-tetrahydropyridine (MPTP), with concomitant reduction of oxygen to hydrogen peroxide and participates in the metabolism of neuroactive and vasoactive amines in the central nervous system and peripheral tissues. Preferentially degrades benzylamine and phenylethylamine. The sequence is that of Amine oxidase [flavin-containing] B from Mus musculus (Mouse).